A 141-amino-acid polypeptide reads, in one-letter code: HTH-type transcriptional regulator ZntR (141 aa).

Residues Met1–Ile70 form the HTH merR-type domain. A DNA-binding region (H-T-H motif) is located at residues Ile4 to Lys23. Zn(2+) is bound by residues Cys114, Cys115, His119, and Cys124.

Homodimer.

Zinc-responsive transcriptional regulator of zntA. This chain is HTH-type transcriptional regulator ZntR (zntR), found in Escherichia coli O157:H7.